Consider the following 131-residue polypeptide: Small ribosomal subunit protein bS16 (131 aa).

Residues 87 to 131 (PGAEGTYRVPTANTKPPRIPGGGAAKAVEAPAEAPAEAETPASES) are disordered. Residues 111 to 131 (AKAVEAPAEAPAEAETPASES) are compositionally biased toward low complexity.

It belongs to the bacterial ribosomal protein bS16 family.

The sequence is that of Small ribosomal subunit protein bS16 from Kineococcus radiotolerans (strain ATCC BAA-149 / DSM 14245 / SRS30216).